A 443-amino-acid chain; its full sequence is Adenylyltransferase and sulfurtransferase UBA4 (443 aa).

Residues Gly-81, Asp-102, 109–113 (SNLHR), Lys-126, and 170–171 (DS) contribute to the ATP site. The Zn(2+) site is built by Cys-212 and Cys-215. The active-site Glycyl thioester intermediate; for adenylyltransferase activity is the Cys-229. Cys-290 and Cys-293 together coordinate Zn(2+). The region spanning 342-441 (KERGFVCLDV…YIDEINPSLP (100 aa)) is the Rhodanese domain. Cys-400 acts as the Cysteine persulfide intermediate; for sulfurtransferase activity in catalysis.

It in the N-terminal section; belongs to the HesA/MoeB/ThiF family. UBA4 subfamily. Requires Zn(2+) as cofactor.

It is found in the cytoplasm. The protein resides in the cytosol. Its pathway is tRNA modification; 5-methoxycarbonylmethyl-2-thiouridine-tRNA biosynthesis. Functionally, plays a central role in 2-thiolation of mcm(5)S(2)U at tRNA wobble positions of cytosolic tRNA(Lys), tRNA(Glu) and tRNA(Gln). Acts by mediating the C-terminal thiocarboxylation of sulfur carrier URM1. Its N-terminus first activates URM1 as acyl-adenylate (-COAMP), then the persulfide sulfur on the catalytic cysteine is transferred to URM1 to form thiocarboxylation (-COSH) of its C-terminus. The reaction probably involves hydrogen sulfide that is generated from the persulfide intermediate and that acts as a nucleophile towards URM1. Subsequently, a transient disulfide bond is formed. Does not use thiosulfate as sulfur donor; NFS1 probably acting as a sulfur donor for thiocarboxylation reactions. Prior mcm(5) tRNA modification by the elongator complex is required for 2-thiolation. May also be involved in protein urmylation. This is Adenylyltransferase and sulfurtransferase UBA4 from Eremothecium gossypii (strain ATCC 10895 / CBS 109.51 / FGSC 9923 / NRRL Y-1056) (Yeast).